The chain runs to 452 residues: MLACLQRTQNAPGQHLACPSKSLELRKCEAVASAMHSSRYPSPAELDAYAEKVANSPLSIKIFPTNIRVPQHKHLSRTVNGYDTSGQRYSPYPQHTAGYQGLLAIVKAAVSSSSTAAPAGPAKSVLKSAEGKRTKLSPAAVQVGIAPYPVPSTLGPLAYPKPPEAPAPPPGLPAAATAASVIPLPGRGLPLPPSNLPSIHSLLYQLNQQCQAPGAAPPACQGMAIPHPSPAKHGPVPSFPSMAYSAAAGLPDCRKGTELGQGATQALTLAGAAKPAGYADSGLDYLLWPQKPPPPPPQPLRAYSGSTVASKSPEACGGRAYERASGSPLNCGVGLPTSFTVGQYFAAPWNSVLVTPTSDCYNPAAAVVVTELGPGAARELAGPPADALSGLPSKSVCNTSVLSSSLQSLEYLINDIRPPCIKEQMLGKGYETVAVPRLLDHQHAHIRLPVYR.

The protein belongs to the FAM222 family.

This is Protein FAM222A (FAM222A) from Homo sapiens (Human).